Here is a 538-residue protein sequence, read N- to C-terminus: Chaperonin GroEL (538 aa).

ATP-binding positions include threonine 29 to proline 32, aspartate 86 to threonine 90, glycine 413, aspartate 479 to leucine 481, and aspartate 495.

Belongs to the chaperonin (HSP60) family. As to quaternary structure, forms a cylinder of 14 subunits composed of two heptameric rings stacked back-to-back. Interacts with the co-chaperonin GroES.

It is found in the cytoplasm. It catalyses the reaction ATP + H2O + a folded polypeptide = ADP + phosphate + an unfolded polypeptide.. Its function is as follows. Together with its co-chaperonin GroES, plays an essential role in assisting protein folding. The GroEL-GroES system forms a nano-cage that allows encapsulation of the non-native substrate proteins and provides a physical environment optimized to promote and accelerate protein folding. This is Chaperonin GroEL from Thermotoga petrophila (strain ATCC BAA-488 / DSM 13995 / JCM 10881 / RKU-1).